Reading from the N-terminus, the 178-residue chain is Ribulose bisphosphate carboxylase small subunit, chloroplastic 2 (178 aa).

Residues 1–54 (MASISSTVATVSRAAPAQANMVAPFTGLKSNVAFPATKKANDFSTLPSNGGRVQ) constitute a chloroplast transit peptide.

Belongs to the RuBisCO small chain family. Heterohexadecamer of 8 large and 8 small subunits.

The protein localises to the plastid. The protein resides in the chloroplast. RuBisCO catalyzes two reactions: the carboxylation of D-ribulose 1,5-bisphosphate, the primary event in carbon dioxide fixation, as well as the oxidative fragmentation of the pentose substrate. Both reactions occur simultaneously and in competition at the same active site. Although the small subunit is not catalytic it is essential for maximal activity. The protein is Ribulose bisphosphate carboxylase small subunit, chloroplastic 2 of Flaveria pringlei.